The sequence spans 107 residues: Envelope small membrane protein (107 aa).

Topologically, residues Met1–Glu11 are virion surface. Residues Asn12–Gly32 traverse the membrane as a helical segment. Topologically, residues Arg33–Ser107 are intravirion.

Belongs to the gammacoronaviruses E protein family. Homooligomer. Interacts with the M membrane protein in the budding compartment of the host cell, which is located between endoplasmic reticulum and the Golgi complex. The cytoplasmic tails of both proteins are important for this function. Interacts with Nucleoprotein.

Its subcellular location is the host Golgi apparatus membrane. Its function is as follows. Plays a central role in virus morphogenesis and assembly. Acts as a viroporin and self-assembles in host membranes forming pentameric protein-lipid pores that allow ion transport. Also plays a role in the induction of apoptosis. This is Envelope small membrane protein from Gallus gallus (Chicken).